The following is a 530-amino-acid chain: NSVYRLKEIVKVLAYYGFGFIVDSKLNGNKKSPENLRKAFEELGPTFIKIGQILSTRPDLLPLPYIKELSKLQNNVPPENFIDIENLFFEELSSTIDNTFLYFDKTPIGSASIAQVHDAILKDGRFVIVKIQRPGIAEMMKTDLSIIKKLLNITKTKFTDALIDPKEAIDELFISTTQELDFINEINNIKKFKKLNEDVKFVRTPYTIDKLCTEKIIVMEKIVGIKIDNLKKLLNEGYDLEELGKKLTLSYFKQVFQDGFFHGDPHPGNLLIRENHICYIDFGIMGTISKSLKISLNDAILAVAYHDVNKMISVIMSIGVKKGYVNRNSLYESIEYLFDNYISVSLKNIKISVMLQEIFQISKNNNIKLPKELTMLLKSTLMIEGVIARISPELSIVDVLIPYVKSQNQNLFFRNFDFDNLLLNGFKFVKSSSEFPSKFVELSESIIRGRAKIQLQHNNLQKPIKDLNRMVNRMVFAIIISSMIIGSSLILRTNIGPKLHDISIIGISGFMIAALMGFYLLISILRSGTL.

Belongs to the protein kinase superfamily. ADCK protein kinase family.

This is an uncharacterized protein from Clostridium pasteurianum.